Consider the following 226-residue polypeptide: Beta-phosphoglucomutase (226 aa).

Aspartate 7 acts as the Nucleophile in catalysis. Residues aspartate 7 and aspartate 9 each contribute to the Mg(2+) site. At aspartate 7 the chain carries 4-aspartylphosphate. Aspartate 9 acts as the Proton donor/acceptor in catalysis. Positions 9, 44, 45, 47, 116, 117, and 118 each coordinate beta-D-glucose 6-phosphate. Aspartate 170 lines the Mg(2+) pocket.

This sequence belongs to the HAD-like hydrolase superfamily. CbbY/CbbZ/Gph/YieH family. In terms of assembly, homodimer. Requires Mg(2+) as cofactor. Autophosphorylated.

Its subcellular location is the cytoplasm. The enzyme catalyses beta-D-glucose 1-phosphate = beta-D-glucose 6-phosphate. In terms of biological role, catalyzes the interconversion of D-glucose 1-phosphate (G1P) and D-glucose 6-phosphate (G6P), forming beta-D-glucose 1,6-(bis)phosphate (beta-G16P) as an intermediate. The chain is Beta-phosphoglucomutase (yvdM) from Bacillus subtilis (strain 168).